We begin with the raw amino-acid sequence, 396 residues long: Stearoyl-[acyl-carrier-protein] 9-desaturase, chloroplastic (396 aa).

A chloroplast-targeting transit peptide spans 1-33 (MAIRINTATFQSDLYRSFAFPQPKPLRSPKFAM). Positions 138, 176, 179, 229, 262, and 265 each coordinate Fe cation.

It belongs to the fatty acid desaturase type 2 family. In terms of assembly, homodimer. The cofactor is Fe(2+).

It localises to the plastid. The protein localises to the chloroplast. It carries out the reaction octadecanoyl-[ACP] + 2 reduced [2Fe-2S]-[ferredoxin] + O2 + 2 H(+) = (9Z)-octadecenoyl-[ACP] + 2 oxidized [2Fe-2S]-[ferredoxin] + 2 H2O. It functions in the pathway lipid metabolism; fatty acid metabolism. In terms of biological role, converts stearoyl-ACP to oleoyl-ACP by introduction of a cis double bond between carbons 9 and 10 of the acyl chain. The sequence is that of Stearoyl-[acyl-carrier-protein] 9-desaturase, chloroplastic from Helianthus annuus (Common sunflower).